A 298-amino-acid chain; its full sequence is GTP cyclohydrolase FolE2 (298 aa).

It belongs to the GTP cyclohydrolase IV family.

It carries out the reaction GTP + H2O = 7,8-dihydroneopterin 3'-triphosphate + formate + H(+). It participates in cofactor biosynthesis; 7,8-dihydroneopterin triphosphate biosynthesis; 7,8-dihydroneopterin triphosphate from GTP: step 1/1. Functionally, converts GTP to 7,8-dihydroneopterin triphosphate. The polypeptide is GTP cyclohydrolase FolE2 (Pseudomonas fluorescens (strain Pf0-1)).